The following is a 334-amino-acid chain: Rhomboid-like protein 14, mitochondrial (334 aa).

The N-terminal 87 residues, 1-87, are a transit peptide targeting the mitochondrion; it reads MENFGEGRRS…RLFLSAFYHV (87 aa). 4 helical membrane passes run 114–134, 146–166, 176–196, and 197–217; these read EFASMVFTLIGMSQGVTLLLA, AYYNEYAVGFSGVLFAMKVVL, VYGILVPTKYAAWAELILVQM, and FVPNASFLGHLGGILAGIIYL. The Nucleophile role is filled by Ser156. Residue His206 is the Charge relay system of the active site. The segment at 273-302 adopts a RanBP2-type zinc-finger fold; it reads GPGIWRCQSCTYDNSGWLSACEMCGSGRAR.

It belongs to the peptidase S54 family.

The protein localises to the mitochondrion membrane. Probable rhomboid-type serine protease that catalyzes intramembrane proteolysis. May function in the heat-shock response pathway. This is Rhomboid-like protein 14, mitochondrial from Arabidopsis thaliana (Mouse-ear cress).